The chain runs to 702 residues: Protein sepa-1 (702 aa).

The tract at residues 39 to 160 (RQRFCYEKTD…KESTSYGQFR (122 aa)) is required for self-association and interaction with pgl-3. Short sequence motifs (LIR) lie at residues 107 to 110 (FVEV), 247 to 250 (FQKI), and 298 to 301 (FGFV). The interval 450–471 (AKDPEEPTTAASEGGNTYGYQE) is disordered. A compositionally biased stretch (polar residues) spans 458 to 468 (TAASEGGNTYG). An LIR 4 motif is present at residues 469-472 (YQEL). Residues 508–543 (AAMDKKKKRRELKSRLNKINAQIDELEKRRMERAGK) adopt a coiled-coil conformation. Positions 545–564 (QVVSSSVPSEEAAQVEAPAS) are disordered. Residues 597 to 674 (NTSKEWIVED…TVDQILKKTL (78 aa)) form the KIX domain. Over residues 675–685 (KKDQRATEHNH) the composition is skewed to basic and acidic residues. The tract at residues 675–702 (KKDQRATEHNHQQPTQSSDELAKNHEKN) is disordered.

As to quaternary structure, self-associates. Interacts (via the LIR motifs) with lgg-1; the interaction is direct. Interacts (via the LIR motifs) with lgg-2; the interaction is direct. Interacts with pgl-3; interaction is enhanced in the presence of RNA. Interacts with epg-2; may be modulated by prmt-1. In terms of processing, degraded by autophagy.

Its subcellular location is the nucleus. The protein resides in the cytoplasm. It localises to the cytoplasmic granule. Functionally, adapter protein that connects P-granules in somatic cells with the autophagic machinery. Association with other adapters such as epg-2 and P-granule components such as pgl-3 is required for the accumulation and degradation of P-granules by autophagy in somatic cells. This ensures exclusive localization of the P-granules in germ cells. This Caenorhabditis elegans protein is Protein sepa-1.